The sequence spans 234 residues: Probable cyclic nucleotide phosphodiesterase Rmag_0669 (234 aa).

Fe cation contacts are provided by D11, H13, D49, N79, H145, H184, and H186. AMP contacts are provided by residues H13, D49, and 79–80 (NH). Residue H186 coordinates AMP.

The protein belongs to the cyclic nucleotide phosphodiesterase class-III family. Requires Fe(2+) as cofactor.

The chain is Probable cyclic nucleotide phosphodiesterase Rmag_0669 from Ruthia magnifica subsp. Calyptogena magnifica.